Reading from the N-terminus, the 48-residue chain is Delta-stichotoxin-She1a (48 aa).

Disulfide bonds link C3-C43, C5-C33, and C26-C44.

Belongs to the sea anemone sodium channel inhibitory toxin family. Type II subfamily.

The protein localises to the secreted. It is found in the nematocyst. Its function is as follows. Binds specifically to voltage-gated sodium channels (Nav), thereby delaying their inactivation during signal transduction. Is highly toxic to crabs (by intrahemocoelic injection), but without effect upon mice (by intraperitoneal injection). This Stichodactyla helianthus (Sun anemone) protein is Delta-stichotoxin-She1a.